Reading from the N-terminus, the 475-residue chain is Threonine synthase (475 aa).

Lys-120 bears the N6-(pyridoxal phosphate)lysine mark.

Belongs to the threonine synthase family. Requires pyridoxal 5'-phosphate as cofactor.

The enzyme catalyses O-phospho-L-homoserine + H2O = L-threonine + phosphate. It functions in the pathway amino-acid biosynthesis; L-threonine biosynthesis; L-threonine from L-aspartate: step 5/5. Catalyzes the gamma-elimination of phosphate from L-phosphohomoserine and the beta-addition of water to produce L-threonine. This chain is Threonine synthase (thrC), found in Methylobacillus glycogenes.